The following is a 501-amino-acid chain: uncharacterized protein (501 aa).

It belongs to the UbiD family.

This is an uncharacterized protein from Synechocystis sp. (strain ATCC 27184 / PCC 6803 / Kazusa).